Here is a 1146-residue protein sequence, read N- to C-terminus: Activator of SKN7 protein 10 (1146 aa).

Polar residues predominate over residues 1-15 (MSDYFSSRPSQTLTP). Disordered regions lie at residues 1 to 32 (MSDYFSSRPSQTLTPMGNKPSGGGGGDDASSI) and 171 to 194 (ITDPFTTAPRGPKKAQPAQKKVGL). Residue Ser344 is modified to Phosphoserine. The 125-residue stretch at 482–606 (CIKAGYFLKK…DCTLKDASST (125 aa)) folds into the PH domain. A disordered region spans residues 553-575 (NNHHRQASDVHNSSTTTGGTAGA). The span at 564 to 575 (NSSTTTGGTAGA) shows a compositional bias: low complexity. Ser793 is modified (phosphoserine). Position 808 is a phosphothreonine (Thr808). 2 disordered regions span residues 835 to 854 (MATSGNTTPSYSSGSRPQSM) and 909 to 982 (PVNS…TAMR). Over residues 912-924 (SPGSSNSESSSGG) the composition is skewed to low complexity. Polar residues predominate over residues 939–950 (YTQRNSEGSSPC). At Ser944 the chain carries Phosphoserine. The segment covering 958 to 968 (QQQQPLQMQPL) has biased composition (low complexity). Residue Ser969 is modified to Phosphoserine. The segment covering 969 to 982 (SRTSSSSVNVTAMR) has biased composition (polar residues). Thr1017 is subject to Phosphothreonine. Phosphoserine occurs at positions 1070, 1095, and 1098. Residues 1124–1146 (GIQEDDGDSTNNDTIKLNQSIYS) are disordered. A compositionally biased stretch (polar residues) spans 1132-1146 (STNNDTIKLNQSIYS).

It belongs to the RGC1 family. In terms of assembly, component of the RNA polymerase II holoenzyme. Interacts with RPO21 and SSN8. Phosphorylated in response to various stresses. stress-induced phosphorylation is partially dependent on HOG1.

It is found in the cytoplasm. Its function is as follows. Positive regulator of FPS1 glycerol channel required for the glycerol efflux. As a component of the RNA polymerase II holoenzyme, is required for SSN8 destruction in response to oxidative stress but not heat shock. Required for cell survival in response to heat shock independent of SSN8. This is Activator of SKN7 protein 10 (ASK10) from Saccharomyces cerevisiae (strain ATCC 204508 / S288c) (Baker's yeast).